Here is a 196-residue protein sequence, read N- to C-terminus: Probable GTP-binding protein EngB (196 aa).

Positions 24–196 (ELSEVALSGR…IWNLIEPYIS (173 aa)) constitute an EngB-type G domain. GTP-binding positions include 32–39 (GRSNVGKS), 59–63 (GKTQT), 77–80 (DVPG), 144–147 (TKED), and 176–178 (YSS). The Mg(2+) site is built by S39 and T61.

The protein belongs to the TRAFAC class TrmE-Era-EngA-EngB-Septin-like GTPase superfamily. EngB GTPase family. Mg(2+) is required as a cofactor.

In terms of biological role, necessary for normal cell division and for the maintenance of normal septation. The chain is Probable GTP-binding protein EngB from Staphylococcus aureus (strain MRSA252).